We begin with the raw amino-acid sequence, 181 residues long: Cyclic AMP-dependent transcription factor ATF-3 (181 aa).

Residues 76 to 97 (VTKAEVAPEEDERKKRRRERNK) form a disordered region. Lys78 is covalently cross-linked (Glycyl lysine isopeptide (Lys-Gly) (interchain with G-Cter in SUMO2)). Positions 86-149 (DERKKRRRER…QHLIYMLNLH (64 aa)) constitute a bZIP domain. Residues 88–110 (RKKRRRERNKIAAAKCRNKKKEK) form a basic motif region. The interval 114 to 142 (LQKESEKLESVNAELKAQIEELKNEKQHL) is leucine-zipper. A Phosphothreonine modification is found at Thr162. Residue Lys175 forms a Glycyl lysine isopeptide (Lys-Gly) (interchain with G-Cter in SUMO2) linkage.

It belongs to the bZIP family. ATF subfamily. As to quaternary structure, binds DNA as a homodimer or a heterodimer. Interacts with KAT5; promoting KAT5 autoacetylation and KAT5 deubiquitination by USP7.

The protein localises to the nucleus. In terms of biological role, this protein binds the cAMP response element (CRE) (consensus: 5'-GTGACGT[AC][AG]-3'), a sequence present in many viral and cellular promoters. Represses transcription from promoters with ATF sites. It may repress transcription by stabilizing the binding of inhibitory cofactors at the promoter. This Bos taurus (Bovine) protein is Cyclic AMP-dependent transcription factor ATF-3 (ATF3).